Consider the following 435-residue polypeptide: Methylenetetrahydrofolate--tRNA-(uracil-5-)-methyltransferase TrmFO (435 aa).

Residue 7 to 12 (GAGLAG) coordinates FAD.

It belongs to the MnmG family. TrmFO subfamily. It depends on FAD as a cofactor.

The protein resides in the cytoplasm. It carries out the reaction uridine(54) in tRNA + (6R)-5,10-methylene-5,6,7,8-tetrahydrofolate + NADH + H(+) = 5-methyluridine(54) in tRNA + (6S)-5,6,7,8-tetrahydrofolate + NAD(+). It catalyses the reaction uridine(54) in tRNA + (6R)-5,10-methylene-5,6,7,8-tetrahydrofolate + NADPH + H(+) = 5-methyluridine(54) in tRNA + (6S)-5,6,7,8-tetrahydrofolate + NADP(+). Its function is as follows. Catalyzes the folate-dependent formation of 5-methyl-uridine at position 54 (M-5-U54) in all tRNAs. This Thermotoga maritima (strain ATCC 43589 / DSM 3109 / JCM 10099 / NBRC 100826 / MSB8) protein is Methylenetetrahydrofolate--tRNA-(uracil-5-)-methyltransferase TrmFO.